Reading from the N-terminus, the 142-residue chain is Non-specific lipid transfer protein GPI-anchored 34 (142 aa).

The first 22 residues, 1–22 (MAVAVTAVLFLAVVIAPQWTET), serve as a signal peptide directing secretion. Positions 21–43 (ETKKPPRPSDTSDTSGTSGRDRR) are disordered. Residues 29–38 (SDTSDTSGTS) show a composition bias toward low complexity. 4 cysteine pairs are disulfide-bonded: Cys46–Cys85, Cys57–Cys69, Cys70–Cys106, and Cys83–Cys114. Residue Asn120 is the site of GPI-anchor amidated asparagine attachment. The propeptide at 121–142 (GGATKKIVASMGLFGVVASLFF) is removed in mature form.

It belongs to the plant LTP family.

The protein resides in the cell membrane. In terms of biological role, probable lipid transfer protein. The chain is Non-specific lipid transfer protein GPI-anchored 34 from Arabidopsis thaliana (Mouse-ear cress).